We begin with the raw amino-acid sequence, 78 residues long: Dihydrofolate reductase type 2 (78 aa).

NADP(+) is bound by residues Lys32–Ala36 and Val66–Tyr69. Ile68 contacts substrate.

As to quaternary structure, homotetramer.

It carries out the reaction (6S)-5,6,7,8-tetrahydrofolate + NADP(+) = 7,8-dihydrofolate + NADPH + H(+). It functions in the pathway cofactor biosynthesis; tetrahydrofolate biosynthesis; 5,6,7,8-tetrahydrofolate from 7,8-dihydrofolate: step 1/1. Its function is as follows. Key enzyme in folate metabolism. Catalyzes an essential reaction for de novo glycine and purine synthesis, and for DNA precursor synthesis. The protein is Dihydrofolate reductase type 2 of Escherichia coli.